A 211-amino-acid chain; its full sequence is MPGSTKSDTKLENEIRISYKSDALDYVYKAIVLFETYDEIILSGVGKAISSVVNVAEMVKRRAKGLHQFTKLYEKEHVIKREDNSGLKKNAKNEDKKSGDEEEEEEEEEEDEENNKNKEANNRTVEFITTVPCMKIILSKNEDKIDKNEIGYQKPLDEKEVNVMTPEQILKEKSYRRRYRRGGRGGDRFRSYRRNYYETSMWNNRRYEKRN.

Residues 84–99 show a composition bias toward basic and acidic residues; the sequence is NSGLKKNAKNEDKKSG. The interval 84–121 is disordered; the sequence is NSGLKKNAKNEDKKSGDEEEEEEEEEEDEENNKNKEAN. A compositionally biased stretch (acidic residues) spans 100 to 113; the sequence is DEEEEEEEEEEDEE.

It belongs to the histone-like Alba family. As to quaternary structure, identified in a TARE6-associated complex consisting of over 30 proteins and including ALBA1, ALBA2 and ALBA4; the complex binds to the non-coding subtelomeric repeat region TARE6.

The protein localises to the nucleus. It is found in the chromosome. The protein resides in the telomere. Its subcellular location is the cytoplasm. In terms of biological role, possesses DNA- and RNA-binding activities. Binds to DNA with relaxed sequence specificity. Associates with the subtelomeric TARE6 repeats. The chain is DNA/RNA-binding protein ALBA2 from Plasmodium falciparum (isolate 3D7).